The sequence spans 147 residues: Large ribosomal subunit protein bL9 (147 aa).

The protein belongs to the bacterial ribosomal protein bL9 family.

Functionally, binds to the 23S rRNA. The sequence is that of Large ribosomal subunit protein bL9 from Clostridium kluyveri (strain NBRC 12016).